The following is an 810-amino-acid chain: Protein kinase C-binding protein NELL1 (810 aa).

Residues 1–21 (MPMDLILVVWFCVCTARTVVG) form the signal peptide. N-linked (GlcNAc...) asparagine glycans are attached at residues N40, N53, N83, N224, N294, and N372. The Laminin G-like domain occupies 64 to 227 (EREIHAAPHV…TQCPNLNHTC (164 aa)). Positions 271–332 (KTCQVSGLLY…IAGQCCKVCR (62 aa)) constitute a VWFC 1 domain. 3 disulfide bridges follow: C395/C407, C401/C416, and C418/C432. Residues D434, I435, and E437 each coordinate Ca(2+). The 42-residue stretch at 434–475 (DIDECAAKMHYCHANTVCVNLPGLYRCDCVPGYIRVDDFSCT) folds into the EGF-like 1; calcium-binding domain. 15 disulfide bridges follow: C438/C451, C445/C460, C462/C474, C480/C493, C487/C502, C504/C515, C519/C529, C523/C535, C537/C546, C553/C566, C560/C575, C577/C594, C600/C613, C607/C622, and C624/C630. Positions 453, 454, and 457 each coordinate Ca(2+). Positions 476 to 516 (EHDECGSGQHNCDENAICTNTVQGHSCTCKPGYVGNGTICR) constitute an EGF-like 2; calcium-binding domain. Residue N511 is glycosylated (N-linked (GlcNAc...) asparagine). Residues 517 to 547 (AFCEEGCRYGGTCVAPNKCVCPSGFTGSHCE) enclose the EGF-like 3 domain. One can recognise an EGF-like 4; calcium-binding domain in the interval 549 to 587 (DIDECSEGIIECHNHSRCVNLPGWYHCECRSGFHDDGTY). Residue N562 is glycosylated (N-linked (GlcNAc...) asparagine). The region spanning 596 to 631 (DIDECALRTHTCWNDSACINLAGGFDCLCPSGPSCS) is the EGF-like 5; calcium-binding domain. A glycan (N-linked (GlcNAc...) asparagine) is linked at N609. Positions 692–750 (SQCLDQNGHKLYRSGDNWTHSCQQCRCLEGEVDCWPLTCPNLSCEYTAILEGECCPRCV) constitute a VWFC 2 domain. Residues N708, N732, and N758 are each glycosylated (N-linked (GlcNAc...) asparagine).

Homotrimer. Binds to PKC beta-1. Interacts with ATRAID; the interaction promotes osteoblast cell differentiation and mineralization. Interacts with ROBO3.

It is found in the cytoplasm. Its subcellular location is the nucleus envelope. The protein localises to the secreted. Functionally, plays a role in the control of cell growth and differentiation. Promotes osteoblast cell differentiation and terminal mineralization. The chain is Protein kinase C-binding protein NELL1 (NELL1) from Homo sapiens (Human).